The chain runs to 452 residues: Probable ECA polymerase (452 aa).

The next 11 helical transmembrane spans lie at 6-26 (FSGL…LTWF), 37-57 (VFFS…TSVL), 63-83 (VGVA…CFYG), 118-138 (VILM…NGFL), 155-175 (GVAL…VYFL), 181-201 (AWLF…MIVG), 207-227 (IIIA…ISLW), 228-248 (MLAA…LKRY), 341-361 (LVVM…GLII), 378-398 (YKAA…IVLA), and 410-430 (VFFL…FWLF).

The protein belongs to the WzyE family. Probably part of a complex composed of WzxE, WzyE and WzzE.

The protein resides in the cell inner membrane. It participates in bacterial outer membrane biogenesis; enterobacterial common antigen biosynthesis. Functionally, probably involved in the polymerization of enterobacterial common antigen (ECA) trisaccharide repeat units. The chain is Probable ECA polymerase from Salmonella heidelberg (strain SL476).